The chain runs to 523 residues: MAAEREPPPLGDGKPTDFEDLEDGEDLFTSTVSTLESSPSSPEPTSLPAEDISANSNGPKPTEVVLDDDREDLFAEATEEVSLDSPEREPILSSEPSPAVTPVTPTTLIAPRIESKSMSAPVIFDRSREEIEEEANGDIFDIEIGVSDPEKVGDGMNAYMAYRVTTKTSLSMFSKSEFSVKRRFSDFLGLHSKLASKYLHVGYIVPPAPEKSIVGMTKVKVGKEDSSSTEFVEKRRAALERYLQRTVKHPTLLQDPDLRQFLESSELPRAVNTQALSGAGILRMVNKAADAVNKMTIKMNESDAWFEEKQQQFENLDQQLRKLHASVEALVCHRKELSANTAAFAKSAAMLGNSEDHTALSRALSQLAEVEEKIDQLHQEQAFADFYMFSELLSDYIRLIAAVKGVFDHRMKCWQKWEDAQITLLKKREAEAKMMVANKPDKIQQAKNEIREEIEEWEAKVQQGERDFEQISKTIRKEVGRFEKERVKDFKTVIIKYLESLVQTQQQLIKYWEAFLPEAKAIA.

A disordered region spans residues 1–104 (MAAEREPPPL…EPSPAVTPVT (104 aa)). 2 stretches are compositionally biased toward low complexity: residues 27–48 (LFTSTVSTLESSPSSPEPTSLP) and 93–104 (SSEPSPAVTPVT). S97 bears the Phosphoserine mark. A phosphothreonine mark is found at T101 and T104. Residues S117 and S119 each carry the phosphoserine modification. Positions 140-269 (FDIEIGVSDP…QFLESSELPR (130 aa)) constitute a PX domain. Residues R183, S185, K211, and R235 each coordinate a 1,2-diacyl-sn-glycero-3-phospho-(1D-myo-inositol-3-phosphate). At S185 the chain carries Phosphoserine. Residues 260–523 (QFLESSELPR…AFLPEAKAIA (264 aa)) form an interaction with RhoG region. Residue S277 is modified to Phosphoserine. The tract at residues 278–295 (GAGILRMVNKAADAVNKM) is membrane-binding amphipathic helix. The 225-residue stretch at 299 to 523 (MNESDAWFEE…AFLPEAKAIA (225 aa)) folds into the BAR domain. At K473 the chain carries N6-acetyllysine.

The protein belongs to the sorting nexin family. Predominantly forms heterodimers with BAR domain-containing sorting nexins SNX5, SNX6 and SNX32; can self-associate to form homodimers. The heterodimers are proposed to self-assemble into helical arrays on the membrane to stabilize and expand local membrane curvature underlying endosomal tubule formation. Thought to be a component of the originally described retromer complex (also called SNX-BAR retromer) which is a pentamer containing the heterotrimeric retromer cargo-selective complex (CSC), also described as vacuolar protein sorting subcomplex (VPS), and a heterodimeric membrane-deforming subcomplex formed between SNX1 or SNX2 and SNX5 or SNX6 (also called SNX-BAR subcomplex); the respective CSC and SNX-BAR subcomplexes associate with low affinity. Interacts with SNX5, SNX6, SNX32, VPS26A, VPS29, VPS35, FNBP1, KALRN, RHOG (GDP-bound form).

It localises to the early endosome membrane. The protein resides in the cell projection. Its subcellular location is the lamellipodium. Functionally, involved in several stages of intracellular trafficking. Interacts with membranes containing phosphatidylinositol 3-phosphate (PtdIns(3P)) or phosphatidylinositol 3,5-bisphosphate (PtdIns(3,5)P2). Acts in part as component of the retromer membrane-deforming SNX-BAR subcomplex. The SNX-BAR retromer mediates retrograde transport of cargo proteins from endosomes to the trans-Golgi network (TGN) and is involved in endosome-to-plasma membrane transport for cargo protein recycling. The SNX-BAR subcomplex functions to deform the donor membrane into a tubular profile called endosome-to-TGN transport carrier (ETC). Can sense membrane curvature and has in vitro vesicle-to-membrane remodeling activity. Required for retrograde endosome-to-TGN transport of TGN38. Promotes KALRN- and RHOG-dependent but retromer-independent membrane remodeling such as lamellipodium formation; the function is dependent on GEF activity of KALRN. The protein is Sorting nexin-2 (SNX2) of Pongo abelii (Sumatran orangutan).